A 214-amino-acid chain; its full sequence is Ribosomal RNA small subunit methyltransferase G (214 aa).

S-adenosyl-L-methionine-binding positions include Gly81, Met86, 132 to 133 (VE), and Arg147.

It belongs to the methyltransferase superfamily. RNA methyltransferase RsmG family.

Its subcellular location is the cytoplasm. The enzyme catalyses guanosine(527) in 16S rRNA + S-adenosyl-L-methionine = N(7)-methylguanosine(527) in 16S rRNA + S-adenosyl-L-homocysteine. In terms of biological role, specifically methylates the N7 position of guanine in position 527 of 16S rRNA. This Pseudomonas paraeruginosa (strain DSM 24068 / PA7) (Pseudomonas aeruginosa (strain PA7)) protein is Ribosomal RNA small subunit methyltransferase G.